Reading from the N-terminus, the 201-residue chain is Large ribosomal subunit protein uL4 (201 aa).

The disordered stretch occupies residues 42–67; the sequence is GNSAQKTRSEVSGGGKKPWNQKGTGR.

This sequence belongs to the universal ribosomal protein uL4 family. Part of the 50S ribosomal subunit.

One of the primary rRNA binding proteins, this protein initially binds near the 5'-end of the 23S rRNA. It is important during the early stages of 50S assembly. It makes multiple contacts with different domains of the 23S rRNA in the assembled 50S subunit and ribosome. Functionally, forms part of the polypeptide exit tunnel. The chain is Large ribosomal subunit protein uL4 from Legionella pneumophila (strain Paris).